Here is a 786-residue protein sequence, read N- to C-terminus: Endonuclease MutS2 (786 aa).

333 to 340 lines the ATP pocket; the sequence is GPNTGGKT. Residues 682 to 709 are disordered; that stretch reads EKIKPSKQSAAQRPVVKVSGGGMSGPST. The 76-residue stretch at 711-786 folds into the Smr domain; that stretch reads LDLRGERYDQ…GSGATIVNFK (76 aa).

Belongs to the DNA mismatch repair MutS family. MutS2 subfamily. In terms of assembly, homodimer. Binds to stalled ribosomes, contacting rRNA.

Its function is as follows. Endonuclease that is involved in the suppression of homologous recombination and thus may have a key role in the control of bacterial genetic diversity. In terms of biological role, acts as a ribosome collision sensor, splitting the ribosome into its 2 subunits. Detects stalled/collided 70S ribosomes which it binds and splits by an ATP-hydrolysis driven conformational change. Acts upstream of the ribosome quality control system (RQC), a ribosome-associated complex that mediates the extraction of incompletely synthesized nascent chains from stalled ribosomes and their subsequent degradation. Probably generates substrates for RQC. The chain is Endonuclease MutS2 from Lacticaseibacillus casei (strain BL23) (Lactobacillus casei).